Consider the following 342-residue polypeptide: Aristolochene synthase (342 aa).

The Mg(2+) site is built by Asp-115, Asn-244, Ser-248, and Glu-252. (2E,6E)-farnesyl diphosphate-binding residues include Arg-340 and Tyr-341.

This sequence belongs to the terpene synthase family. In terms of assembly, homodimer. Mg(2+) is required as a cofactor.

It catalyses the reaction (2E,6E)-farnesyl diphosphate = (+)-aristolochene + diphosphate. It participates in sesquiterpene biosynthesis; aristolochene biosynthesis; aristolochene from farnesyl diphosphate: step 1/1. In terms of biological role, aristolochene synthase; part of the gene cluster that mediates the biosynthesis of PR-toxin, a bicyclic sesquiterpene belonging to the eremophilane class and acting as a mycotoxin. The first step of the pathway is catalyzed by the aristolochene synthase which performs the cyclization of trans,trans-farnesyl diphosphate (FPP) to the bicyclic sesquiterpene aristolochene. Following the formation of aristolochene, the non-oxygenated aristolochene is converted to the trioxygenated intermediate eremofortin B, via 7-epi-neopetasone. This conversion appears to involve three enzymes, a hydroxysterol oxidase-like enzyme, the quinone-oxidase prx3 that forms the quinone-type-structure in the bicyclic nucleus of aristolochene with the C8-oxo group and the C-3 hydroxyl group, and the P450 monooxygenase ORF6 that introduces the epoxide at the double bond between carbons 1 and 2. No monoxy or dioxy-intermediates have been reported to be released to the broth, so these three early oxidative reactions may be coupled together. Eremofortin B is further oxidized by another P450 monooxygenase, that introduces a second epoxide between carbons 7 and 11 prior to acetylation to eremofortin A by the acetyltransferase ORF8. The second epoxidation may be performed by a second P450 monooxygenase. After the acetylation step, eremofortin A is converted to eremofortin C and then to PR-toxin. First the conversion of eremofortin A to eremofortin C proceeds by oxidation of the side chain of the molecule at C-12 and is catalyzed by the short-chain oxidoreductase prx1. The cytochrome P450 monooxygenase ORF5 also plays a role in this step. The primary alcohol formed at C-12 is finally oxidized by the short-chain alcohol dehydrogenase prx4 that forms PR-toxin. The sequence is that of Aristolochene synthase from Penicillium roqueforti (strain FM164).